The sequence spans 276 residues: Shikimate dehydrogenase (NADP(+)) (276 aa).

Shikimate-binding positions include 18–20 (SRS) and Thr-65. The Proton acceptor role is filled by Lys-69. Shikimate-binding residues include Asn-90 and Asp-106. NADP(+) is bound by residues 132 to 136 (GAGGA) and Ile-221. Tyr-223 serves as a coordination point for shikimate. Residue Gly-244 coordinates NADP(+).

It belongs to the shikimate dehydrogenase family. In terms of assembly, homodimer.

It catalyses the reaction shikimate + NADP(+) = 3-dehydroshikimate + NADPH + H(+). It functions in the pathway metabolic intermediate biosynthesis; chorismate biosynthesis; chorismate from D-erythrose 4-phosphate and phosphoenolpyruvate: step 4/7. Functionally, involved in the biosynthesis of the chorismate, which leads to the biosynthesis of aromatic amino acids. Catalyzes the reversible NADPH linked reduction of 3-dehydroshikimate (DHSA) to yield shikimate (SA). The polypeptide is Shikimate dehydrogenase (NADP(+)) (Paramagnetospirillum magneticum (strain ATCC 700264 / AMB-1) (Magnetospirillum magneticum)).